A 455-amino-acid chain; its full sequence is MSTKLTGYVWDGCAASGMKLSSVAIMARLADFSNDEGVCWPSIETIARQIGAGMSTVRTAIARLEAEGWLTRKARRQGDGSSPHCAVVDEYHEHATDALYTTMLTGMGARRQPLMWAITTAGYNIEGPCYDKRREVIEMLNGSVPNDELFGIIYTVDEGDDWTDPQVLEKANPNIGVSVYREFLLSQQQRAKNNARLANVFKTKHLNIWASARSAYFNLVSWQSCEDKSLTLEQFEGQPCILAFDLARKLDMNSMARLYTREIDGKTHYYSVAPRFWVPYDTVYSVEKNEDRRTAERFQKWVEMGVLTVTDGAEVDYRYILEEAKAANKISPVSESPIDPFGATGLSHDLADEDLNPVTIIQNYTNMSDPMKELEAAIESGRFHHDGNPIMTWCIGNVVGKTIPGNDDVVKPVKEQAENKIDGAVALIMAVGRAMLYEKEDTLSDHIESYGIRSL.

The protein belongs to the phage terminase family.

This is Protein YmfN (ymfN) from Escherichia coli (strain K12).